A 320-amino-acid polypeptide reads, in one-letter code: o-succinylbenzoate synthase (320 aa).

The active-site Proton donor is lysine 133. The Mg(2+) site is built by aspartate 161, glutamate 190, and aspartate 213. Catalysis depends on lysine 235, which acts as the Proton acceptor.

The protein belongs to the mandelate racemase/muconate lactonizing enzyme family. MenC type 1 subfamily. The cofactor is a divalent metal cation.

The catalysed reaction is (1R,6R)-6-hydroxy-2-succinyl-cyclohexa-2,4-diene-1-carboxylate = 2-succinylbenzoate + H2O. The protein operates within quinol/quinone metabolism; 1,4-dihydroxy-2-naphthoate biosynthesis; 1,4-dihydroxy-2-naphthoate from chorismate: step 4/7. It participates in quinol/quinone metabolism; menaquinone biosynthesis. Converts 2-succinyl-6-hydroxy-2,4-cyclohexadiene-1-carboxylate (SHCHC) to 2-succinylbenzoate (OSB). This chain is o-succinylbenzoate synthase, found in Shigella flexneri.